The sequence spans 472 residues: E3 ubiquitin-protein ligase MYLIP-A (472 aa).

An FERM domain is found at 1–279 (MLCHVTRPDA…ETHAFYRCDT (279 aa)). An RING-type zinc finger spans residues 384–419 (CMLCCEEEIDAAFCPCGHMVCCQNCAAQLQSCPVCR).

In terms of assembly, interacts with anxa5. Ubiquitous.

It localises to the cytoplasm. The protein localises to the cytosol. It carries out the reaction S-ubiquitinyl-[E2 ubiquitin-conjugating enzyme]-L-cysteine + [acceptor protein]-L-lysine = [E2 ubiquitin-conjugating enzyme]-L-cysteine + N(6)-ubiquitinyl-[acceptor protein]-L-lysine.. Its pathway is protein modification; protein ubiquitination. Functionally, E3 ubiquitin-protein ligase that mediates ubiquitination and subsequent proteasomal degradation of myosin regulatory light chain (MRLC). Regulates cell movements during gastrulation by acting downstream of fz7 to antagonize the frizzled-signaling pathway. This Danio rerio (Zebrafish) protein is E3 ubiquitin-protein ligase MYLIP-A (mylipa).